The primary structure comprises 151 residues: UPF0719 transmembrane protein MAP_1032c (151 aa).

Helical transmembrane passes span 20-40, 60-80, 90-110, and 130-150; these read VATI…FYAV, AVVV…TAIA, LVGV…ALLA, and PGSF…AAAV.

It belongs to the UPF0719 family.

The protein resides in the cell membrane. The protein is UPF0719 transmembrane protein MAP_1032c of Mycolicibacterium paratuberculosis (strain ATCC BAA-968 / K-10) (Mycobacterium paratuberculosis).